The chain runs to 80 residues: Large ribosomal subunit protein bL31B (80 aa).

Belongs to the bacterial ribosomal protein bL31 family. Type B subfamily. In terms of assembly, part of the 50S ribosomal subunit.

The sequence is that of Large ribosomal subunit protein bL31B from Oenococcus oeni (strain ATCC BAA-331 / PSU-1).